A 552-amino-acid polypeptide reads, in one-letter code: MTKFVFVTGGVVSSLGKGIAAASLAAILESRGLKVTLLKLDPYINVDPGTMSPFQHGEVFVTEDGAETDLDLGHYERFITAKMRKVNNFTTGQIYESVIRKERRGEYLGKTVQVIPHITNEIQDYIYRGAEGFDVALVEIGGTVGDIESLPFLEAARQLSLRAGRNAAAFVHLTLVPYLVSAGELKTKPTQHSVQKLREIGISPDALLCRADRPIPDDERAKISLFSNVPEDAVISVWDADTIYKIPQMLYDQGLDRIVCEKLALSPKPADLSVWTKLVHALENPKHSVTIGMVGKYVDLTESYKSLTEALRHAGIHTESRVNIEYLDSEEIEASGPQCLAKYDAILVPGGFGKRGVEGKIAAARFAREHAIPYFGICLGMQVALIEYARNVAGLTKANSTEFDPDTEQPVVALINEWQNHDGKVERRDLNSDLGGTMRLGSQTCAVKPGTLAAEIYGNEVTERHRHRYEANNHYLGRVEEAGLIVSARTPAESLCEIMELPRTGEHAHPWYVGVQYHPEFNSTPRDGHPLFISFIKAALAHKQAEESKKVT.

The interval 1–265 (MTKFVFVTGG…DRIVCEKLAL (265 aa)) is amidoligase domain. Position 13 (S13) interacts with CTP. S13 contacts UTP. ATP-binding positions include 14–19 (SLGKGI) and D71. Mg(2+) is bound by residues D71 and E139. Residues 146–148 (DIE), 186–191 (KTKPTQ), and K222 each bind CTP. UTP-binding positions include 186–191 (KTKPTQ) and K222. Residues 290 to 545 (TIGMVGKYVD…IKAALAHKQA (256 aa)) form the Glutamine amidotransferase type-1 domain. G351 contacts L-glutamine. Catalysis depends on C378, which acts as the Nucleophile; for glutamine hydrolysis. L-glutamine-binding positions include 379–382 (LGMQ), E402, and R468. Active-site residues include H518 and E520.

The protein belongs to the CTP synthase family. As to quaternary structure, homotetramer.

The catalysed reaction is UTP + L-glutamine + ATP + H2O = CTP + L-glutamate + ADP + phosphate + 2 H(+). The enzyme catalyses L-glutamine + H2O = L-glutamate + NH4(+). It carries out the reaction UTP + NH4(+) + ATP = CTP + ADP + phosphate + 2 H(+). It functions in the pathway pyrimidine metabolism; CTP biosynthesis via de novo pathway; CTP from UDP: step 2/2. With respect to regulation, allosterically activated by GTP, when glutamine is the substrate; GTP has no effect on the reaction when ammonia is the substrate. The allosteric effector GTP functions by stabilizing the protein conformation that binds the tetrahedral intermediate(s) formed during glutamine hydrolysis. Inhibited by the product CTP, via allosteric rather than competitive inhibition. Catalyzes the ATP-dependent amination of UTP to CTP with either L-glutamine or ammonia as the source of nitrogen. Regulates intracellular CTP levels through interactions with the four ribonucleotide triphosphates. This Herminiimonas arsenicoxydans protein is CTP synthase.